A 365-amino-acid chain; its full sequence is MVPFPRILGIETSCDETAAAVVERDAEGHSRILSDVVLSQLDEHSAYGGVVPEIAARAHVEALDELIEEALMRANVSLADVDAIAATSGPGLIGGLLVGLMTGKAIAKAAGKPLYAVNHLEGHALTARLTDGLSFPYLMLLVSGGHTQLILVRGVGDYERWGTTIDDALGEAFDKTAKLLGLPYPGGPAVERMARDGNAGRFDFPRPLVGEARLDFSFSGLKTAVRLAAQEIAPLSDQDVADICASFQRAISRTLKDRIGRGLQRFKREFPSIGETPALVVAGGVAANLELRATLQGLCDKNGFRFIAPPLSLCTDNAVMIAWAGLERMAIGVAPDALDVQPRSRWPLDANAERLIGFGKRGAKA.

Fe cation contacts are provided by histidine 119 and histidine 123. Substrate contacts are provided by residues 141–145 (LVSGG), aspartate 174, glycine 187, and asparagine 288. A Fe cation-binding site is contributed by aspartate 316.

Belongs to the KAE1 / TsaD family. The cofactor is Fe(2+).

The protein resides in the cytoplasm. It catalyses the reaction L-threonylcarbamoyladenylate + adenosine(37) in tRNA = N(6)-L-threonylcarbamoyladenosine(37) in tRNA + AMP + H(+). Functionally, required for the formation of a threonylcarbamoyl group on adenosine at position 37 (t(6)A37) in tRNAs that read codons beginning with adenine. Is involved in the transfer of the threonylcarbamoyl moiety of threonylcarbamoyl-AMP (TC-AMP) to the N6 group of A37, together with TsaE and TsaB. TsaD likely plays a direct catalytic role in this reaction. This Rhizobium etli (strain CIAT 652) protein is tRNA N6-adenosine threonylcarbamoyltransferase.